The sequence spans 344 residues: Methionine import ATP-binding protein MetN (344 aa).

The ABC transporter domain occupies 2 to 241; that stretch reads IEIRNLSQRF…PHHEVTRALI (240 aa). 38-45 contributes to the ATP binding site; it reads GRSGAGKS.

It belongs to the ABC transporter superfamily. Methionine importer (TC 3.A.1.24) family. As to quaternary structure, the complex is composed of two ATP-binding proteins (MetN), two transmembrane proteins (MetI) and a solute-binding protein (MetQ).

It localises to the cell inner membrane. The enzyme catalyses L-methionine(out) + ATP + H2O = L-methionine(in) + ADP + phosphate + H(+). The catalysed reaction is D-methionine(out) + ATP + H2O = D-methionine(in) + ADP + phosphate + H(+). Its function is as follows. Part of the ABC transporter complex MetNIQ involved in methionine import. Responsible for energy coupling to the transport system. This is Methionine import ATP-binding protein MetN from Burkholderia thailandensis (strain ATCC 700388 / DSM 13276 / CCUG 48851 / CIP 106301 / E264).